A 425-amino-acid polypeptide reads, in one-letter code: Serine--tRNA ligase (425 aa).

Residue 230 to 232 (TAE) coordinates L-serine. 261–263 (RSE) lines the ATP pocket. Glutamate 284 is a binding site for L-serine. 348-351 (EISS) is an ATP binding site. L-serine is bound at residue serine 384.

This sequence belongs to the class-II aminoacyl-tRNA synthetase family. Type-1 seryl-tRNA synthetase subfamily. In terms of assembly, homodimer. The tRNA molecule binds across the dimer.

The protein localises to the cytoplasm. It carries out the reaction tRNA(Ser) + L-serine + ATP = L-seryl-tRNA(Ser) + AMP + diphosphate + H(+). It catalyses the reaction tRNA(Sec) + L-serine + ATP = L-seryl-tRNA(Sec) + AMP + diphosphate + H(+). Its pathway is aminoacyl-tRNA biosynthesis; selenocysteinyl-tRNA(Sec) biosynthesis; L-seryl-tRNA(Sec) from L-serine and tRNA(Sec): step 1/1. Catalyzes the attachment of serine to tRNA(Ser). Is also able to aminoacylate tRNA(Sec) with serine, to form the misacylated tRNA L-seryl-tRNA(Sec), which will be further converted into selenocysteinyl-tRNA(Sec). This chain is Serine--tRNA ligase, found in Streptococcus pyogenes serotype M2 (strain MGAS10270).